A 361-amino-acid polypeptide reads, in one-letter code: tRNA-specific 2-thiouridylase MnmA (361 aa).

ATP contacts are provided by residues 11–18 and methionine 37; that span reads GMSGGVDS. Cysteine 106 functions as the Nucleophile in the catalytic mechanism. Cysteine 106 and cysteine 202 are joined by a disulfide. Glycine 130 provides a ligand contact to ATP. The interval 152-154 is interaction with tRNA; sequence KDQ. The Cysteine persulfide intermediate role is filled by cysteine 202. Positions 308-309 are interaction with tRNA; that stretch reads RY.

This sequence belongs to the MnmA/TRMU family.

It localises to the cytoplasm. The catalysed reaction is S-sulfanyl-L-cysteinyl-[protein] + uridine(34) in tRNA + AH2 + ATP = 2-thiouridine(34) in tRNA + L-cysteinyl-[protein] + A + AMP + diphosphate + H(+). Its function is as follows. Catalyzes the 2-thiolation of uridine at the wobble position (U34) of tRNA, leading to the formation of s(2)U34. The polypeptide is tRNA-specific 2-thiouridylase MnmA (Clostridium botulinum (strain Eklund 17B / Type B)).